The sequence spans 515 residues: Maturase K (515 aa).

The protein belongs to the intron maturase 2 family. MatK subfamily.

The protein localises to the plastid. Its subcellular location is the chloroplast. In terms of biological role, usually encoded in the trnK tRNA gene intron. Probably assists in splicing its own and other chloroplast group II introns. The polypeptide is Maturase K (Pinus leiophylla (Chihuahua pine)).